The sequence spans 595 residues: Aspartate--tRNA(Asp/Asn) ligase (595 aa).

Glu-174 lines the L-aspartate pocket. Positions 198–201 (QLFK) are aspartate. Arg-220 contributes to the L-aspartate binding site. Residues 220 to 222 (RDE) and Gln-229 each bind ATP. Residue His-452 participates in L-aspartate binding. An ATP-binding site is contributed by Glu-486. Arg-493 is an L-aspartate binding site. 538–541 (GLDR) serves as a coordination point for ATP.

It belongs to the class-II aminoacyl-tRNA synthetase family. Type 1 subfamily. In terms of assembly, homodimer.

It is found in the cytoplasm. The enzyme catalyses tRNA(Asx) + L-aspartate + ATP = L-aspartyl-tRNA(Asx) + AMP + diphosphate. Aspartyl-tRNA synthetase with relaxed tRNA specificity since it is able to aspartylate not only its cognate tRNA(Asp) but also tRNA(Asn). Reaction proceeds in two steps: L-aspartate is first activated by ATP to form Asp-AMP and then transferred to the acceptor end of tRNA(Asp/Asn). The sequence is that of Aspartate--tRNA(Asp/Asn) ligase from Nitrosococcus oceani (strain ATCC 19707 / BCRC 17464 / JCM 30415 / NCIMB 11848 / C-107).